We begin with the raw amino-acid sequence, 284 residues long: 4-hydroxy-3-methylbut-2-enyl diphosphate reductase (284 aa).

[4Fe-4S] cluster is bound at residue Cys-12. His-40 and His-76 together coordinate (2E)-4-hydroxy-3-methylbut-2-enyl diphosphate. Residues His-40 and His-76 each contribute to the dimethylallyl diphosphate site. Isopentenyl diphosphate contacts are provided by His-40 and His-76. Cys-98 serves as a coordination point for [4Fe-4S] cluster. His-126 is a binding site for (2E)-4-hydroxy-3-methylbut-2-enyl diphosphate. His-126 is a binding site for dimethylallyl diphosphate. His-126 contributes to the isopentenyl diphosphate binding site. Glu-128 serves as the catalytic Proton donor. Residue Thr-161 participates in (2E)-4-hydroxy-3-methylbut-2-enyl diphosphate binding. Cys-191 is a [4Fe-4S] cluster binding site. (2E)-4-hydroxy-3-methylbut-2-enyl diphosphate-binding residues include Ser-219, Ser-220, Asn-221, and Ser-263. The dimethylallyl diphosphate site is built by Ser-219, Ser-220, Asn-221, and Ser-263. Isopentenyl diphosphate-binding residues include Ser-219, Ser-220, Asn-221, and Ser-263.

This sequence belongs to the IspH family. The cofactor is [4Fe-4S] cluster.

The catalysed reaction is isopentenyl diphosphate + 2 oxidized [2Fe-2S]-[ferredoxin] + H2O = (2E)-4-hydroxy-3-methylbut-2-enyl diphosphate + 2 reduced [2Fe-2S]-[ferredoxin] + 2 H(+). The enzyme catalyses dimethylallyl diphosphate + 2 oxidized [2Fe-2S]-[ferredoxin] + H2O = (2E)-4-hydroxy-3-methylbut-2-enyl diphosphate + 2 reduced [2Fe-2S]-[ferredoxin] + 2 H(+). The protein operates within isoprenoid biosynthesis; dimethylallyl diphosphate biosynthesis; dimethylallyl diphosphate from (2E)-4-hydroxy-3-methylbutenyl diphosphate: step 1/1. Its pathway is isoprenoid biosynthesis; isopentenyl diphosphate biosynthesis via DXP pathway; isopentenyl diphosphate from 1-deoxy-D-xylulose 5-phosphate: step 6/6. Catalyzes the conversion of 1-hydroxy-2-methyl-2-(E)-butenyl 4-diphosphate (HMBPP) into a mixture of isopentenyl diphosphate (IPP) and dimethylallyl diphosphate (DMAPP). Acts in the terminal step of the DOXP/MEP pathway for isoprenoid precursor biosynthesis. The sequence is that of 4-hydroxy-3-methylbut-2-enyl diphosphate reductase from Petrotoga mobilis (strain DSM 10674 / SJ95).